The following is a 161-amino-acid chain: MSLAQTLRGALLTDFMGAAWIAVREMFRRKATVNYPFEKNPLSPRFRGEHVLRRYPSGEERCIACKLCEAICPAQAITIEAEPREDGARRTTRYDIDMVKCIYCGFCQEACPVDAIVEGPNFEFATETREELFYDKERLLANGDRWERLIAKNLELDAPYR.

4Fe-4S ferredoxin-type domains are found at residues 53-82 (RRYPSGEERCIACKLCEAICPAQAITIEAE) and 92-121 (TRYDIDMVKCIYCGFCQEACPVDAIVEGPN). [4Fe-4S] cluster is bound by residues Cys62, Cys65, Cys68, Cys72, Cys101, Cys104, Cys107, and Cys111.

The protein belongs to the complex I 23 kDa subunit family. As to quaternary structure, NDH-1 is composed of 14 different subunits. Subunits NuoA, H, J, K, L, M, N constitute the membrane sector of the complex. It depends on [4Fe-4S] cluster as a cofactor.

Its subcellular location is the cell inner membrane. The catalysed reaction is a quinone + NADH + 5 H(+)(in) = a quinol + NAD(+) + 4 H(+)(out). Its function is as follows. NDH-1 shuttles electrons from NADH, via FMN and iron-sulfur (Fe-S) centers, to quinones in the respiratory chain. The immediate electron acceptor for the enzyme in this species is believed to be ubiquinone. Couples the redox reaction to proton translocation (for every two electrons transferred, four hydrogen ions are translocated across the cytoplasmic membrane), and thus conserves the redox energy in a proton gradient. The sequence is that of NADH-quinone oxidoreductase subunit I from Hyphomonas neptunium (strain ATCC 15444).